The sequence spans 301 residues: tRNA dimethylallyltransferase 1 (301 aa).

Residue 11–18 (GPTGVGKT) coordinates ATP. Substrate is bound at residue 13 to 18 (TGVGKT). Positions 36–39 (DSRQ) are interaction with substrate tRNA.

It belongs to the IPP transferase family. As to quaternary structure, monomer. The cofactor is Mg(2+).

The catalysed reaction is adenosine(37) in tRNA + dimethylallyl diphosphate = N(6)-dimethylallyladenosine(37) in tRNA + diphosphate. Its function is as follows. Catalyzes the transfer of a dimethylallyl group onto the adenine at position 37 in tRNAs that read codons beginning with uridine, leading to the formation of N6-(dimethylallyl)adenosine (i(6)A). This chain is tRNA dimethylallyltransferase 1, found in Bacteroides fragilis (strain YCH46).